The sequence spans 1377 residues: Dicer-like protein 2 (1377 aa).

The region spanning methionine 23–alanine 203 is the Helicase ATP-binding domain. Methionine 36–threonine 43 serves as a coordination point for ATP. The short motif at aspartate 144–histidine 147 is the DEAH box element. The 178-residue stretch at lysine 367–valine 544 folds into the Helicase C-terminal domain. The Dicer dsRNA-binding fold domain occupies alanine 563 to arginine 657. RNase III domains lie at alanine 916–glycine 1056 and asparagine 1090–arginine 1274. Residues glutamate 1129, aspartate 1260, and glutamate 1263 each coordinate Mg(2+).

It belongs to the helicase family. Dicer subfamily. Requires Mg(2+) as cofactor. Mn(2+) serves as cofactor.

Functionally, dicer-like endonuclease involved in cleaving double-stranded RNA in the RNA interference (RNAi) pathway. Produces 21 to 25 bp dsRNAs (siRNAs) which target the selective destruction of homologous RNAs leading to sequence-specific suppression of gene expression, called post-transcriptional gene silencing (PTGS). Part of a broad host defense response against viral infection and transposons. The chain is Dicer-like protein 2 (dcl2) from Aspergillus terreus (strain NIH 2624 / FGSC A1156).